A 208-amino-acid chain; its full sequence is Ribosome maturation factor RimP (208 aa).

The segment at 189-208 (EAPETGATTMARDGSEEETK) is disordered.

Belongs to the RimP family.

The protein localises to the cytoplasm. Its function is as follows. Required for maturation of 30S ribosomal subunits. In Ruegeria pomeroyi (strain ATCC 700808 / DSM 15171 / DSS-3) (Silicibacter pomeroyi), this protein is Ribosome maturation factor RimP.